The following is a 277-amino-acid chain: Phosphoenolpyruvate synthase regulatory protein (277 aa).

An ADP-binding site is contributed by 157–164 (GVSRCGKT).

This sequence belongs to the pyruvate, phosphate/water dikinase regulatory protein family. PSRP subfamily.

It catalyses the reaction [pyruvate, water dikinase] + ADP = [pyruvate, water dikinase]-phosphate + AMP + H(+). It carries out the reaction [pyruvate, water dikinase]-phosphate + phosphate + H(+) = [pyruvate, water dikinase] + diphosphate. In terms of biological role, bifunctional serine/threonine kinase and phosphorylase involved in the regulation of the phosphoenolpyruvate synthase (PEPS) by catalyzing its phosphorylation/dephosphorylation. The protein is Phosphoenolpyruvate synthase regulatory protein of Escherichia coli O6:K15:H31 (strain 536 / UPEC).